Consider the following 95-residue polypeptide: Large ribosomal subunit protein bL25 (95 aa).

The protein belongs to the bacterial ribosomal protein bL25 family. As to quaternary structure, part of the 50S ribosomal subunit; part of the 5S rRNA/L5/L18/L25 subcomplex. Contacts the 5S rRNA. Binds to the 5S rRNA independently of L5 and L18.

Functionally, this is one of the proteins that binds to the 5S RNA in the ribosome where it forms part of the central protuberance. The sequence is that of Large ribosomal subunit protein bL25 from Haemophilus influenzae (strain 86-028NP).